Consider the following 160-residue polypeptide: Transcription elongation factor GreA (160 aa).

A coiled-coil region spans residues 1–72; that stretch reads MAEKTYPMTL…QISSLETKIR (72 aa).

The protein belongs to the GreA/GreB family.

Functionally, necessary for efficient RNA polymerase transcription elongation past template-encoded arresting sites. The arresting sites in DNA have the property of trapping a certain fraction of elongating RNA polymerases that pass through, resulting in locked ternary complexes. Cleavage of the nascent transcript by cleavage factors such as GreA or GreB allows the resumption of elongation from the new 3'terminus. GreA releases sequences of 2 to 3 nucleotides. This Streptococcus pneumoniae serotype 4 (strain ATCC BAA-334 / TIGR4) protein is Transcription elongation factor GreA.